The chain runs to 33 residues: uncharacterized protein (33 aa).

The Cytoplasmic segment spans residues methionine 1 to lysine 12. Residues leucine 13–tyrosine 33 traverse the membrane as a helical segment.

The protein localises to the cell inner membrane. This is an uncharacterized protein from Escherichia coli (strain K12).